Consider the following 677-residue polypeptide: Penicillin-binding protein activator LpoA (677 aa).

An N-terminal signal peptide occupies residues 1 to 26; the sequence is MLPSKIVRHKAGRFVPVLLAGLILAA. Cysteine 27 carries the N-palmitoyl cysteine lipid modification. Cysteine 27 carries the S-diacylglycerol cysteine lipid modification. The segment at 309 to 359 is disordered; sequence QPADANAVVSPSANPAAAQQSGTAQQPATTQQQPQQQPAAEPASNAQVKVY. Residues 313–355 are compositionally biased toward low complexity; sequence ANAVVSPSANPAAAQQSGTAQQPATTQQQPQQQPAAEPASNAQ.

This sequence belongs to the LpoA family. In terms of assembly, interacts with PBP1a.

The protein resides in the cell outer membrane. In terms of biological role, regulator of peptidoglycan synthesis that is essential for the function of penicillin-binding protein 1A (PBP1a). The protein is Penicillin-binding protein activator LpoA of Pantoea ananatis (strain LMG 20103).